The sequence spans 194 residues: ATP-dependent Clp protease proteolytic subunit (194 aa).

Residue Ser-99 is the Nucleophile of the active site. The active site involves His-124.

This sequence belongs to the peptidase S14 family. Fourteen ClpP subunits assemble into 2 heptameric rings which stack back to back to give a disk-like structure with a central cavity, resembling the structure of eukaryotic proteasomes.

The protein resides in the cytoplasm. It carries out the reaction Hydrolysis of proteins to small peptides in the presence of ATP and magnesium. alpha-casein is the usual test substrate. In the absence of ATP, only oligopeptides shorter than five residues are hydrolyzed (such as succinyl-Leu-Tyr-|-NHMec, and Leu-Tyr-Leu-|-Tyr-Trp, in which cleavage of the -Tyr-|-Leu- and -Tyr-|-Trp bonds also occurs).. In terms of biological role, cleaves peptides in various proteins in a process that requires ATP hydrolysis. Has a chymotrypsin-like activity. Plays a major role in the degradation of misfolded proteins. In Clostridium perfringens (strain ATCC 13124 / DSM 756 / JCM 1290 / NCIMB 6125 / NCTC 8237 / Type A), this protein is ATP-dependent Clp protease proteolytic subunit.